A 632-amino-acid chain; its full sequence is 2-hydroxyacyl-CoA lyase 2 (632 aa).

A helical membrane pass occupies residues 10–30 (AWGFFSSFLLLAFGTLVAALL). Residue glutamate 98 participates in thiamine diphosphate binding. Positions 470-550 (DFVGTAAYLV…VMALIGNDAG (81 aa)) are thiamine pyrophosphate binding. Mg(2+)-binding residues include aspartate 521 and asparagine 547.

Belongs to the TPP enzyme family. It depends on Mg(2+) as a cofactor. Thiamine diphosphate is required as a cofactor.

The protein localises to the endoplasmic reticulum membrane. It catalyses the reaction 2-hydroxyoctadecanoyl-CoA = heptadecanal + formyl-CoA. The enzyme catalyses (2R)-hydroxyhexadecanoyl-CoA = pentadecanal + formyl-CoA. Endoplasmic reticulum 2-OH acyl-CoA lyase involved in the cleavage (C1 removal) reaction in the fatty acid alpha-oxydation in a thiamine pyrophosphate (TPP)-dependent manner. Involved in the phytosphingosine degradation pathway. The protein is 2-hydroxyacyl-CoA lyase 2 (ILVBL) of Bos taurus (Bovine).